The chain runs to 247 residues: ATP synthase subunit a, chloroplastic (247 aa).

5 helical membrane-spanning segments follow: residues 38–58 (QVLI…IIAV), 95–115 (VPFI…GALL), 134–154 (INTT…AGLS), 199–219 (LVVV…VMFL), and 220–240 (GLFT…AYIG).

The protein belongs to the ATPase A chain family. F-type ATPases have 2 components, CF(1) - the catalytic core - and CF(0) - the membrane proton channel. CF(1) has five subunits: alpha(3), beta(3), gamma(1), delta(1), epsilon(1). CF(0) has four main subunits: a, b, b' and c.

It is found in the plastid. It localises to the chloroplast thylakoid membrane. Its function is as follows. Key component of the proton channel; it plays a direct role in the translocation of protons across the membrane. The chain is ATP synthase subunit a, chloroplastic from Oryza sativa subsp. indica (Rice).